The chain runs to 105 residues: Large ribosomal subunit protein bL21 (105 aa).

The protein belongs to the bacterial ribosomal protein bL21 family. Part of the 50S ribosomal subunit. Contacts protein L20.

In terms of biological role, this protein binds to 23S rRNA in the presence of protein L20. The protein is Large ribosomal subunit protein bL21 of Rhizobium johnstonii (strain DSM 114642 / LMG 32736 / 3841) (Rhizobium leguminosarum bv. viciae).